The following is a 414-amino-acid chain: Methanesulfonate monooxygenase hydroxylase subunit alpha (414 aa).

In terms of domain architecture, Rieske spans 44-163; the sequence is WVPFRHESEL…CEVKFGGFVW (120 aa). The [2Fe-2S] cluster site is built by Cys-86, His-88, Cys-115, and His-118. Residue His-225 participates in Fe cation binding.

Belongs to the bacterial ring-hydroxylating dioxygenase alpha subunit family. In terms of assembly, the MSA monooxygenase system consists of 4 proteins: the 2 subunits of the hydroxylase component (MsmA and MsmB), a ferredoxin (MsmC) and a ferredoxin reductase (MsmD). The hydroxylase component consists of a 3 alpha (MsmA) and 3 beta (MsmB) subunits. Requires [2Fe-2S] cluster as cofactor. The cofactor is Fe cation.

Its subcellular location is the cytoplasm. The enzyme catalyses methanesulfonate + NADH + O2 = sulfite + formaldehyde + NAD(+) + H2O. MSAMO is inhibited by metal chelators (such as bathophenanthroline, bathocuprione, neocuprione, alpha-alpha-dipyridil and sodium EDTA) and by sodium azide, sodium arsenate and potassium cyanide. Functionally, methanesulfonate monooxygenase (MSAMO) mediates the primary degradation of methanesulfonic acid (MSA) to produce formaldehyd and inorganic sulfite by initial hydroxylation of the carbon atom prior to spontaneous cleavage of the unstable hydroxymethanesulfonic acid. MSAMO has a restricted substrate range that includes only the short-chain aliphatic sulfonates (methane- to butanesulfonate) and excludes all larger molecules, such as arylsulfonates and aromatic sulfonates. All MSAMO components are required for enzyme activity. This Methylosulfonomonas methylovora protein is Methanesulfonate monooxygenase hydroxylase subunit alpha.